The sequence spans 176 residues: Pituitary adenylate cyclase-activating polypeptide (176 aa).

Residues 1 to 24 (MTMCSGARLALLVYGIIMHSSVYC) form the signal peptide. Residues 25-80 (SPAAAGLRFPGIRPEDEAYDEDGNPLQDFYDSDPPGVGGPASTLRDAYALYYPAEE) constitute a propeptide that is removed on maturation. The interval 150–158 (VKKYLAAVL) is important for receptor binding. Leu158 bears the Leucine amide mark. Residue Lys169 is modified to Lysine amide. Residues 173–176 (IAYL) constitute a propeptide that is removed on maturation.

It belongs to the glucagon family.

The protein resides in the secreted. PACAP is a neuropeptide involved in diverse array of physiological processes through activating the PACAP subfamily of class B1 G protein-coupled receptors: VIP receptor 1 (VIPR1), VIP receptor 2 (VIPR2), and PACAP type I receptor (ADCYAP1R1). Exerts neuroprotective and general cytoprotective effects due to anti-apoptotic, anti-inflammatory, and antioxidant actions. Promotes neuron projection development through the RAPGEF2/Rap1/B-Raf/ERK pathway. In chromaffin cells, induces long-lasting increase of intracellular calcium concentrations and neuroendocrine secretion. Involved in the control of glucose homeostasis, induces insulin secretion by pancreatic beta cells. PACAP exists in two bioactive forms from proteolysis of the same precursor protein, PACAP27 and PACAP38, which differ by eleven amino acid residues in the C-terminus. The sequence is that of Pituitary adenylate cyclase-activating polypeptide (ADCYAP1) from Sus scrofa (Pig).